Here is a 118-residue protein sequence, read N- to C-terminus: Large ribosomal subunit protein uL18 (118 aa).

This sequence belongs to the universal ribosomal protein uL18 family. As to quaternary structure, part of the 50S ribosomal subunit; part of the 5S rRNA/L5/L18/L25 subcomplex. Contacts the 5S and 23S rRNAs.

Functionally, this is one of the proteins that bind and probably mediate the attachment of the 5S RNA into the large ribosomal subunit, where it forms part of the central protuberance. The sequence is that of Large ribosomal subunit protein uL18 from Zymomonas mobilis subsp. mobilis (strain ATCC 31821 / ZM4 / CP4).